The primary structure comprises 231 residues: 3-oxoadipate CoA-transferase subunit A (231 aa).

25-31 (GGFGTAG) serves as a coordination point for CoA.

The protein belongs to the 3-oxoacid CoA-transferase subunit A family. Heterodimer.

The catalysed reaction is 3-oxoadipate + succinyl-CoA = 3-oxoadipyl-CoA + succinate. Its pathway is aromatic compound metabolism; beta-ketoadipate pathway; acetyl-CoA and succinyl-CoA from 3-oxoadipate: step 1/2. This chain is 3-oxoadipate CoA-transferase subunit A (pcaI), found in Pseudomonas putida (Arthrobacter siderocapsulatus).